Consider the following 98-residue polypeptide: uncharacterized protein (98 aa).

This is an uncharacterized protein from Rickettsia conorii (strain ATCC VR-613 / Malish 7).